Consider the following 1218-residue polypeptide: Chitin synthase 4 (1218 aa).

Disordered stretches follow at residues 1–93 (MAEP…PERN) and 132–190 (TVSS…RRQK). Basic and acidic residues predominate over residues 14–34 (TRDKSHSPYRESPSRRLRDVE). Asparagine 50 carries N-linked (GlcNAc...) asparagine glycosylation. Polar residues-rich tracts occupy residues 71 to 80 (SNPNPMSQSD) and 133 to 142 (VSSGSTQQDT). Over residues 175-190 (RKDTRNLTEEEKRRQK) the composition is skewed to basic and acidic residues. An N-linked (GlcNAc...) asparagine glycan is attached at asparagine 180. The next 2 helical transmembrane spans lie at 200-220 (IWNIYCAVVTFWAPDCLLQCF) and 235-255 (VGLISIILLIAAFVGFLTFGF). Asparagine 365, asparagine 404, and asparagine 426 each carry an N-linked (GlcNAc...) asparagine glycan. A helical transmembrane segment spans residues 487–507 (VVLYVSLVFILAIVAAKFFLA). Disordered stretches follow at residues 548-570 (PKITDPASTVTGSDGRTSKRGSM) and 582-606 (YAVDRRSSRPPPTTMTSQSSNAKLL). The span at 553–562 (PASTVTGSDG) shows a compositional bias: polar residues. Asparagine 617, asparagine 903, and asparagine 1030 each carry an N-linked (GlcNAc...) asparagine glycan. The next 3 helical transmembrane spans lie at 1062–1082 (IGTLVLPAAISFTFYLIIISI), 1087–1107 (VPVIPLVLLALILGLPAILIV), and 1115–1135 (YILWMGIYLLSLPIWNFVLPA). The segment at 1188–1218 (QANGSVWNQQPPTRPPSGYGSMHGFEPYRDY) is disordered. Positions 1189 to 1198 (ANGSVWNQQP) are enriched in polar residues. A glycan (N-linked (GlcNAc...) asparagine) is linked at asparagine 1190.

It belongs to the chitin synthase family. Class IV subfamily. Maximal activity requires trypsin activation, suggesting a zymogenic nature.

Its subcellular location is the cell membrane. The catalysed reaction is [(1-&gt;4)-N-acetyl-beta-D-glucosaminyl](n) + UDP-N-acetyl-alpha-D-glucosamine = [(1-&gt;4)-N-acetyl-beta-D-glucosaminyl](n+1) + UDP + H(+). Its activity is regulated as follows. Activity is stimulated by Mg(2+), and is more inhibited by polyoxin D than by nikkomycin. Functionally, polymerizes chitin, a structural polymer of the cell wall and septum, by transferring the sugar moiety of UDP-GlcNAc to the non-reducing end of the growing chitin polymer. CHS4 synthesizes a large amount of chitin and appears to play a role in the process of cell separation. CHS4 is particularly well suited for functioning at the higher temperatures associated with its poorly characterized saprophic environment and with human infection. The sequence is that of Chitin synthase 4 from Exophiala dermatitidis (strain ATCC 34100 / CBS 525.76 / NIH/UT8656) (Black yeast).